Consider the following 58-residue polypeptide: Large ribosomal subunit protein bL32c (58 aa).

Positions 1–23 (MAVPKKRTSKAKKNARKSVWKKK) are disordered.

It belongs to the bacterial ribosomal protein bL32 family.

It is found in the plastid. The protein localises to the chloroplast. This is Large ribosomal subunit protein bL32c (rpl32-A) from Trieres chinensis (Marine centric diatom).